The following is a 129-amino-acid chain: Probable cytochrome b5 2 (129 aa).

A Cytochrome b5 heme-binding domain is found at 3–79 (EKTITVEEVL…LEKFYIGNLL (77 aa)). Residues H38 and H62 each contribute to the heme site. The chain crosses the membrane as a helical span at residues 105 to 125 (VKPAMWLFVLVMVVAYFAFRK).

It belongs to the cytochrome b5 family.

The protein resides in the endoplasmic reticulum membrane. It localises to the microsome membrane. The protein localises to the mitochondrion. Functionally, membrane bound hemoprotein which function as an electron carrier for several membrane bound oxygenases. In Schizosaccharomyces pombe (strain 972 / ATCC 24843) (Fission yeast), this protein is Probable cytochrome b5 2 (oca8).